Here is a 160-residue protein sequence, read N- to C-terminus: Phosphopantetheine adenylyltransferase (160 aa).

Substrate is bound at residue T10. ATP-binding positions include T10–F11 and H18. Residues K42, L74, and R88 each coordinate substrate. ATP-binding positions include G89 to R91, E99, and N124 to T130.

It belongs to the bacterial CoaD family. As to quaternary structure, homohexamer. It depends on Mg(2+) as a cofactor.

The protein localises to the cytoplasm. It catalyses the reaction (R)-4'-phosphopantetheine + ATP + H(+) = 3'-dephospho-CoA + diphosphate. It functions in the pathway cofactor biosynthesis; coenzyme A biosynthesis; CoA from (R)-pantothenate: step 4/5. Reversibly transfers an adenylyl group from ATP to 4'-phosphopantetheine, yielding dephospho-CoA (dPCoA) and pyrophosphate. The protein is Phosphopantetheine adenylyltransferase of Shewanella piezotolerans (strain WP3 / JCM 13877).